A 924-amino-acid chain; its full sequence is MDYKETLLMPKTDFPMRGNLPKREPEMQKKWEEMDIYRKVQERTKGRPLFVLHDGPPYANGDIHMGHALNKILKDIIVRYKSMSGYCAPYVPGWDTHGLPIETALAKQGVDRKSMSVAEFRKRCEQYAYEQIDNQRRQFKRLGVRGDWDNPYITLKPEYEAQQIKVFGEMAKKGLIYKGLKPVYWSPSSESALAEAEIEYKDKRSPSIYVAFPVKNGKGVLEGDERIVIWTTTPWTIPANLAIAVHPDLDYHVVDVSGKRYVVAAALAESVAKEIGWDAWSVVKTVKGKELEYVVARHPFYERDSLVVCGEHVTTDAGTGCVHTAPGHGEDDFLVGQKYGLPVLCPVDERGYMTEEAPGFAGMFYEDANKAITQKLEEVGALLKLGFITHSYPHDWRTKQPTIFRATTQWFASIDKIRNELLQAIKETKWIPEWGEIRIHNMVRDRGDWCISRQRAWGVPIPVFYGENGEPIITDETIEHVSNLFRQYGSNVWFEREAKDLLPEGFTHPSSPNGIFTKETDIMDVWFDSGSSHQAVLVERDDLVRPADLYLEGSDQYRGWFNSSLSTAVAVTGKAPYKGVLSHGFVLDGEGRKMSKSLGNVVVPAKVMEQFGADILRLWVASVDYQADVRISDHILKQVSEVYRKIRNTFRFMLGNLFDFDPNQNAVPIGELGEVDRYMLAKLNKLIAKVKKAYDSYDFAAVYHEMNHFCTVELSAFYLDMAKDILYIEAADSRARRAVQTVLYETVVALAKLIAPILPHTADEVWEHIPNRRENVESVQLTDMPEPIAIDGEEALLAKWDAFMDVRDDIFKALENARNEKVIGKSLTASVIVYPKDEARKLLASLDADLRQLLIVSAFSIADEPYDAAPAEAERLDHVAVIVRPAEGETCERCWTVTKEVGADPSHPTLCPRCAHIVNEHYSA.

Positions 57–67 match the 'HIGH' region motif; that stretch reads PYANGDIHMGH. Residue E552 participates in L-isoleucyl-5'-AMP binding. Positions 593 to 597 match the 'KMSKS' region motif; sequence KMSKS. Residue K596 participates in ATP binding. 4 residues coordinate Zn(2+): C891, C894, C911, and C914.

It belongs to the class-I aminoacyl-tRNA synthetase family. IleS type 1 subfamily. In terms of assembly, monomer. Zn(2+) serves as cofactor.

The protein resides in the cytoplasm. The enzyme catalyses tRNA(Ile) + L-isoleucine + ATP = L-isoleucyl-tRNA(Ile) + AMP + diphosphate. Its function is as follows. Catalyzes the attachment of isoleucine to tRNA(Ile). As IleRS can inadvertently accommodate and process structurally similar amino acids such as valine, to avoid such errors it has two additional distinct tRNA(Ile)-dependent editing activities. One activity is designated as 'pretransfer' editing and involves the hydrolysis of activated Val-AMP. The other activity is designated 'posttransfer' editing and involves deacylation of mischarged Val-tRNA(Ile). The protein is Isoleucine--tRNA ligase of Geobacillus kaustophilus (strain HTA426).